Reading from the N-terminus, the 394-residue chain is Saposin-like protein 11 (394 aa).

Residues 1 to 18 (MSVFRFLLFLSLLVGSNA) form the signal peptide. N-linked (GlcNAc...) asparagine glycans are attached at residues N25 and N272. One can recognise a Saposin B-type domain in the interval 306–394 (GNMVCDICEK…SFCKHVPFCK (89 aa)). 3 disulfides stabilise this stretch: C310-C393, C313-C387, and C343-C359.

This chain is Saposin-like protein 11 (spp-11), found in Caenorhabditis elegans.